A 370-amino-acid chain; its full sequence is Subtilisin-like protease (370 aa).

The first 17 residues, 1–17 (MIASIVFFIVLVDGVAT), serve as a signal peptide directing secretion. Active-site charge relay system residues include aspartate 13, histidine 35, and serine 190. One can recognise a Peptidase S8 domain in the interval 18–261 (GSPNALVTDF…FGEVSPSRLE (244 aa)). Residues 240 to 370 (RVTDRWTHRN…TTEGTCHGIR (131 aa)) form the P/Homo B domain.

The protein belongs to the peptidase S8 family.

The chain is Subtilisin-like protease (ORF47) from Ictalurid herpesvirus 1 (strain Auburn) (IcHV-1).